The sequence spans 309 residues: Probable porphobilinogen deaminase (309 aa).

Position 233 is an S-(dipyrrolylmethanemethyl)cysteine (C233).

It belongs to the HMBS family. Requires dipyrromethane as cofactor.

It carries out the reaction 4 porphobilinogen + H2O = hydroxymethylbilane + 4 NH4(+). Its pathway is porphyrin-containing compound metabolism; protoporphyrin-IX biosynthesis; coproporphyrinogen-III from 5-aminolevulinate: step 2/4. Functionally, tetrapolymerization of the monopyrrole PBG into the hydroxymethylbilane pre-uroporphyrinogen in several discrete steps. In Methanococcoides burtonii (strain DSM 6242 / NBRC 107633 / OCM 468 / ACE-M), this protein is Probable porphobilinogen deaminase.